Here is a 216-residue protein sequence, read N- to C-terminus: Probable transaldolase (216 aa).

Lysine 85 functions as the Schiff-base intermediate with substrate in the catalytic mechanism.

The protein belongs to the transaldolase family. Type 3B subfamily.

It is found in the cytoplasm. The catalysed reaction is D-sedoheptulose 7-phosphate + D-glyceraldehyde 3-phosphate = D-erythrose 4-phosphate + beta-D-fructose 6-phosphate. It functions in the pathway carbohydrate degradation; pentose phosphate pathway; D-glyceraldehyde 3-phosphate and beta-D-fructose 6-phosphate from D-ribose 5-phosphate and D-xylulose 5-phosphate (non-oxidative stage): step 2/3. In terms of biological role, transaldolase is important for the balance of metabolites in the pentose-phosphate pathway. The chain is Probable transaldolase from Dehalococcoides mccartyi (strain ATCC BAA-2266 / KCTC 15142 / 195) (Dehalococcoides ethenogenes (strain 195)).